The following is a 117-amino-acid chain: uncharacterized protein (117 aa).

It is found in the cytoplasm. The protein resides in the nucleus. This is an uncharacterized protein from Schizosaccharomyces pombe (strain 972 / ATCC 24843) (Fission yeast).